A 91-amino-acid polypeptide reads, in one-letter code: Potassium channel toxin BuTXK-beta (91 aa).

The signal sequence occupies residues 1-20 (MQRNLVVLLLLGMVALSSCG). Positions 21 to 27 (LREKHFQ) are excised as a propeptide. A BetaSPN-type CS-alpha/beta domain is found at 54-91 (QFGCPAYQGYCDDHCQDIKKEEGFCHGMKCKCGIPMGF). Cystine bridges form between cysteine 57/cysteine 78, cysteine 64/cysteine 83, and cysteine 68/cysteine 85.

The protein belongs to the long chain scorpion toxin family. Class 1 subfamily. In terms of tissue distribution, expressed by the venom gland.

The protein localises to the secreted. In terms of biological role, inhibits voltage-gated potassium channel. The protein is Potassium channel toxin BuTXK-beta of Buthus israelis (Israeli scorpion).